The following is a 155-amino-acid chain: Cell division protein SepF (155 aa).

The span at T16 to E35 shows a compositional bias: acidic residues. The tract at residues T16 to Q44 is disordered.

It belongs to the SepF family. Homodimer. Interacts with FtsZ.

It localises to the cytoplasm. In terms of biological role, cell division protein that is part of the divisome complex and is recruited early to the Z-ring. Probably stimulates Z-ring formation, perhaps through the cross-linking of FtsZ protofilaments. Its function overlaps with FtsA. The sequence is that of Cell division protein SepF from Acetivibrio thermocellus (strain ATCC 27405 / DSM 1237 / JCM 9322 / NBRC 103400 / NCIMB 10682 / NRRL B-4536 / VPI 7372) (Clostridium thermocellum).